Consider the following 183-residue polypeptide: BLOC-1-related complex subunit 8 homolog (183 aa).

A disordered region spans residues 152-183 (MIGPGTATGRTEAQAATSSNPGELQRSYTTLH). Polar residues predominate over residues 159-183 (TGRTEAQAATSSNPGELQRSYTTLH).

The protein belongs to the BORCS8 family.

It is found in the lysosome membrane. May participate in the coupling of lysosomes to microtubule plus-end-directed kinesin motor. This is BLOC-1-related complex subunit 8 homolog from Drosophila melanogaster (Fruit fly).